The following is a 688-amino-acid chain: Zinc finger CCCH domain-containing protein 22 (688 aa).

Positions 62-123 (ALLPPPPPPS…QPFSRSNGSV (62 aa)) are disordered. The segment covering 101–117 (PLSASSPSSWAQAQPFS) has biased composition (low complexity). The segment at 233 to 260 (GFGWKPCLYYARGFCKNGSSCRFVHGDD) adopts a C3H1-type zinc-finger fold. In terms of domain architecture, RRM spans 366–442 (RQIYLTFPAD…RVLVKPYKEK (77 aa)). The stretch at 487–522 (TNEMMLRRKLEEQQQAAELQQAIELHSRRLMDLQLL) forms a coiled coil. The tract at residues 552 to 624 (LATTMVESPP…PTKSSVSAHQ (73 aa)) is disordered. Positions 574–589 (TEERKMVNGGGDKEES) are enriched in basic and acidic residues. The segment covering 613-624 (ASPTKSSVSAHQ) has biased composition (polar residues).

This is Zinc finger CCCH domain-containing protein 22 from Oryza sativa subsp. japonica (Rice).